Reading from the N-terminus, the 74-residue chain is ATP synthase subunit c (74 aa).

2 helical membrane passes run Phe8–Ile28 and Ile52–Ile72.

It belongs to the ATPase C chain family. In terms of assembly, F-type ATPases have 2 components, F(1) - the catalytic core - and F(0) - the membrane proton channel. F(1) has five subunits: alpha(3), beta(3), gamma(1), delta(1), epsilon(1). F(0) has three main subunits: a(1), b(2) and c(10-14). The alpha and beta chains form an alternating ring which encloses part of the gamma chain. F(1) is attached to F(0) by a central stalk formed by the gamma and epsilon chains, while a peripheral stalk is formed by the delta and b chains.

It is found in the cell inner membrane. Functionally, f(1)F(0) ATP synthase produces ATP from ADP in the presence of a proton or sodium gradient. F-type ATPases consist of two structural domains, F(1) containing the extramembraneous catalytic core and F(0) containing the membrane proton channel, linked together by a central stalk and a peripheral stalk. During catalysis, ATP synthesis in the catalytic domain of F(1) is coupled via a rotary mechanism of the central stalk subunits to proton translocation. In terms of biological role, key component of the F(0) channel; it plays a direct role in translocation across the membrane. A homomeric c-ring of between 10-14 subunits forms the central stalk rotor element with the F(1) delta and epsilon subunits. The protein is ATP synthase subunit c of Rickettsia conorii (strain ATCC VR-613 / Malish 7).